Here is a 117-residue protein sequence, read N- to C-terminus: Large ribosomal subunit protein eL8 (117 aa).

The protein belongs to the eukaryotic ribosomal protein eL8 family. As to quaternary structure, part of the 50S ribosomal subunit. Probably part of the RNase P complex.

Its subcellular location is the cytoplasm. Multifunctional RNA-binding protein that recognizes the K-turn motif in ribosomal RNA, the RNA component of RNase P, box H/ACA, box C/D and box C'/D' sRNAs. This chain is Large ribosomal subunit protein eL8, found in Methanocaldococcus jannaschii (strain ATCC 43067 / DSM 2661 / JAL-1 / JCM 10045 / NBRC 100440) (Methanococcus jannaschii).